Reading from the N-terminus, the 165-residue chain is Chorismate pyruvate-lyase (165 aa).

Substrate-binding residues include M35, R77, L115, and E156.

The protein belongs to the UbiC family. In terms of assembly, monomer.

It is found in the cytoplasm. The enzyme catalyses chorismate = 4-hydroxybenzoate + pyruvate. It functions in the pathway cofactor biosynthesis; ubiquinone biosynthesis. In terms of biological role, removes the pyruvyl group from chorismate, with concomitant aromatization of the ring, to provide 4-hydroxybenzoate (4HB) for the ubiquinone pathway. The sequence is that of Chorismate pyruvate-lyase from Shigella sonnei (strain Ss046).